The sequence spans 204 residues: Dephospho-CoA kinase (204 aa).

In terms of domain architecture, DPCK spans 3–204 (VIGLTGGIGS…DRLDLAYRAH (202 aa)). 11–16 (GSGKSY) provides a ligand contact to ATP.

It belongs to the CoaE family.

The protein resides in the cytoplasm. The enzyme catalyses 3'-dephospho-CoA + ATP = ADP + CoA + H(+). It participates in cofactor biosynthesis; coenzyme A biosynthesis; CoA from (R)-pantothenate: step 5/5. Functionally, catalyzes the phosphorylation of the 3'-hydroxyl group of dephosphocoenzyme A to form coenzyme A. The sequence is that of Dephospho-CoA kinase from Ralstonia nicotianae (strain ATCC BAA-1114 / GMI1000) (Ralstonia solanacearum).